The following is a 178-amino-acid chain: Protein GrpE (178 aa).

A compositionally biased stretch (pro residues) spans 1–11 (MSENQNPPPSP). Residues 1–23 (MSENQNPPPSPEEIEAAMSANAA) are disordered.

Belongs to the GrpE family. Homodimer.

The protein resides in the cytoplasm. Participates actively in the response to hyperosmotic and heat shock by preventing the aggregation of stress-denatured proteins, in association with DnaK and GrpE. It is the nucleotide exchange factor for DnaK and may function as a thermosensor. Unfolded proteins bind initially to DnaJ; upon interaction with the DnaJ-bound protein, DnaK hydrolyzes its bound ATP, resulting in the formation of a stable complex. GrpE releases ADP from DnaK; ATP binding to DnaK triggers the release of the substrate protein, thus completing the reaction cycle. Several rounds of ATP-dependent interactions between DnaJ, DnaK and GrpE are required for fully efficient folding. This is Protein GrpE from Acidovorax sp. (strain JS42).